The sequence spans 203 residues: UDP-N-acetylglucosamine transferase subunit ALG13 (203 aa).

It belongs to the glycosyltransferase 28 family. Heterodimer with ALG14 to form a functional enzyme.

It is found in the endoplasmic reticulum. The enzyme catalyses an N-acetyl-alpha-D-glucosaminyl-diphospho-di-trans,poly-cis-dolichol + UDP-N-acetyl-alpha-D-glucosamine = an N,N'-diacetylchitobiosyl-diphospho-di-trans,poly-cis-dolichol + UDP + H(+). Involved in protein N-glycosylation. Essential for the second step of the dolichol-linked oligosaccharide pathway. The polypeptide is UDP-N-acetylglucosamine transferase subunit ALG13 (ALG13) (Eremothecium gossypii (strain ATCC 10895 / CBS 109.51 / FGSC 9923 / NRRL Y-1056) (Yeast)).